Reading from the N-terminus, the 469-residue chain is Putative dipeptidase SAUSA300_1697 (469 aa).

His-84 serves as a coordination point for Zn(2+). Asp-86 is an active-site residue. Asp-115 serves as a coordination point for Zn(2+). The active-site Proton acceptor is the Glu-149. Residues Glu-150, Asp-173, and His-440 each coordinate Zn(2+).

Belongs to the peptidase M20A family. Zn(2+) is required as a cofactor.

This chain is Putative dipeptidase SAUSA300_1697, found in Staphylococcus aureus (strain USA300).